The sequence spans 31 residues: Cyclotide psybry C (31 aa).

The cyclopeptide (Gly-Asn) cross-link spans 1-31 (GFNPCGETCQIDQTCHAPGCTCSIANICVRN). Cystine bridges form between cysteine 5-cysteine 20, cysteine 9-cysteine 22, and cysteine 15-cysteine 28.

Post-translationally, this is a cyclic peptide.

Functionally, probably participates in a plant defense mechanism. In Psychotria brachyceras, this protein is Cyclotide psybry C.